We begin with the raw amino-acid sequence, 75 residues long: Large ribosomal subunit protein bL31 (75 aa).

This sequence belongs to the bacterial ribosomal protein bL31 family. Type A subfamily. In terms of assembly, part of the 50S ribosomal subunit.

In terms of biological role, binds the 23S rRNA. The sequence is that of Large ribosomal subunit protein bL31 from Sphingopyxis alaskensis (strain DSM 13593 / LMG 18877 / RB2256) (Sphingomonas alaskensis).